The primary structure comprises 229 residues: Lipoprotein-releasing system ATP-binding protein LolD 1 (229 aa).

Positions 2 to 229 (LVVSELSKSY…VRRGRFGITA (228 aa)) constitute an ABC transporter domain. 38-45 (GPSGSGKT) is an ATP binding site.

It belongs to the ABC transporter superfamily. Lipoprotein translocase (TC 3.A.1.125) family. The complex is composed of two ATP-binding proteins (LolD) and two transmembrane proteins (LolC and LolE).

Its subcellular location is the cell inner membrane. Functionally, part of the ABC transporter complex LolCDE involved in the translocation of mature outer membrane-directed lipoproteins, from the inner membrane to the periplasmic chaperone, LolA. Responsible for the formation of the LolA-lipoprotein complex in an ATP-dependent manner. This is Lipoprotein-releasing system ATP-binding protein LolD 1 from Rhodopirellula baltica (strain DSM 10527 / NCIMB 13988 / SH1).